We begin with the raw amino-acid sequence, 501 residues long: Probable cytochrome P450 6a20 (501 aa).

A heme-binding site is contributed by C445.

This sequence belongs to the cytochrome P450 family. The cofactor is heme.

Its subcellular location is the endoplasmic reticulum membrane. The protein resides in the microsome membrane. May be involved in the metabolism of insect hormones and in the breakdown of synthetic insecticides. This is Probable cytochrome P450 6a20 (Cyp6a20) from Drosophila melanogaster (Fruit fly).